A 324-amino-acid chain; its full sequence is Transcription factor MYB74 (324 aa).

HTH myb-type domains are found at residues 10-62 (KNGL…TNYL) and 63-117 (RPDI…RKRL). DNA-binding regions (H-T-H motif) lie at residues 38 to 62 (WRTL…TNYL) and 90 to 113 (WSAI…NTHI).

As to expression, highly expressed in flowers and at lower levels in rosette leaves and cauline leaves. Expressed at low levels in roots, stems and siliques.

It is found in the nucleus. Functionally, probable transcription factor that may function in salt stress response. This is Transcription factor MYB74 from Arabidopsis thaliana (Mouse-ear cress).